A 289-amino-acid polypeptide reads, in one-letter code: Orotidine 5'-phosphate decarboxylase (289 aa).

The Proton donor role is filled by Lys97.

The protein belongs to the OMP decarboxylase family. Type 2 subfamily.

It carries out the reaction orotidine 5'-phosphate + H(+) = UMP + CO2. The protein operates within pyrimidine metabolism; UMP biosynthesis via de novo pathway; UMP from orotate: step 2/2. This chain is Orotidine 5'-phosphate decarboxylase, found in Petrotoga mobilis (strain DSM 10674 / SJ95).